A 351-amino-acid chain; its full sequence is Methylthioribose-1-phosphate isomerase (351 aa).

Residues 51-53, Arg-94, and Gln-199 contribute to the substrate site; that span reads RGA. The active-site Proton donor is the Asp-240. 250–251 lines the substrate pocket; the sequence is NK.

Belongs to the EIF-2B alpha/beta/delta subunits family. MtnA subfamily. In terms of assembly, homodimer.

The catalysed reaction is 5-(methylsulfanyl)-alpha-D-ribose 1-phosphate = 5-(methylsulfanyl)-D-ribulose 1-phosphate. It functions in the pathway amino-acid biosynthesis; L-methionine biosynthesis via salvage pathway; L-methionine from S-methyl-5-thio-alpha-D-ribose 1-phosphate: step 1/6. Functionally, catalyzes the interconversion of methylthioribose-1-phosphate (MTR-1-P) into methylthioribulose-1-phosphate (MTRu-1-P). This chain is Methylthioribose-1-phosphate isomerase, found in Bacillus cereus (strain ZK / E33L).